An 863-amino-acid polypeptide reads, in one-letter code: Leucine--tRNA ligase (863 aa).

The 'HIGH' region signature appears at 42–52 (PYPSGRLHMGH). The short motif at 622 to 626 (KMSKS) is the 'KMSKS' region element. Residue Lys-625 participates in ATP binding.

It belongs to the class-I aminoacyl-tRNA synthetase family.

Its subcellular location is the cytoplasm. The enzyme catalyses tRNA(Leu) + L-leucine + ATP = L-leucyl-tRNA(Leu) + AMP + diphosphate. This Shewanella denitrificans (strain OS217 / ATCC BAA-1090 / DSM 15013) protein is Leucine--tRNA ligase.